We begin with the raw amino-acid sequence, 309 residues long: Ankyrin repeat protein VACWR203 (309 aa).

5 ANK repeats span residues 13 to 44, 110 to 142, 160 to 189, 197 to 231, and 269 to 298; these read SVFK…SLTI, KYGT…DINA, FVYH…DLTI, PVVY…RASH, and EGRT…DIVV.

This sequence belongs to the orthopoxviruses VACWR203 protein family.

The sequence is that of Ankyrin repeat protein VACWR203 from Bos taurus (Bovine).